Consider the following 114-residue polypeptide: Photosystem II reaction center Psb28 protein (114 aa).

The protein belongs to the Psb28 family. As to quaternary structure, part of the photosystem II complex.

The protein localises to the cellular thylakoid membrane. This chain is Photosystem II reaction center Psb28 protein, found in Rippkaea orientalis (strain PCC 8801 / RF-1) (Cyanothece sp. (strain PCC 8801)).